Consider the following 548-residue polypeptide: Methyl-accepting chemotaxis protein HlyB (548 aa).

Topologically, residues 1-10 are cytoplasmic; the sequence is MIINKFSLKW. A helical transmembrane segment spans residues 11 to 31; the sequence is MLAIAVAIPAIALLFVAFTSL. Residues 32 to 199 lie on the Periplasmic side of the membrane; sequence NTMSVMQAQS…SFEAGRTKQM (168 aa). The chain crosses the membrane as a helical span at residues 200 to 220; it reads VIIAAGLIISFITSLVIITNL. The 54-residue stretch at 218–271 folds into the HAMP domain; it reads TNLRSRVAYLKDRMSSAAANLSLRTRLELDGNDELCDIGKSFNAFIDKVHHSIE. Residues 221–548 are Cytoplasmic-facing; it reads RSRVAYLKDR…LDKLVGSFEL (328 aa). The 237-residue stretch at 276–512 folds into the Methyl-accepting transducer domain; the sequence is NSKELATMAS…DINRNVEDIN (237 aa).

It belongs to the methyl-accepting chemotaxis (MCP) protein family.

The protein localises to the cell inner membrane. Functionally, chemotactic-signal transducers respond to changes in the concentration of attractants and repellents in the environment, transduce a signal from the outside to the inside of the cell, and facilitate sensory adaptation through the variation of the level of methylation. The chain is Methyl-accepting chemotaxis protein HlyB (hlyB) from Vibrio cholerae serotype O1 (strain ATCC 39315 / El Tor Inaba N16961).